The sequence spans 1413 residues: DNA-directed RNA polymerase subunit beta' (1413 aa).

4 residues coordinate Zn(2+): cysteine 70, cysteine 72, cysteine 85, and cysteine 88. 3 residues coordinate Mg(2+): aspartate 460, aspartate 462, and aspartate 464. Residues cysteine 814, cysteine 888, cysteine 895, and cysteine 898 each coordinate Zn(2+).

Belongs to the RNA polymerase beta' chain family. The RNAP catalytic core consists of 2 alpha, 1 beta, 1 beta' and 1 omega subunit. When a sigma factor is associated with the core the holoenzyme is formed, which can initiate transcription. Requires Mg(2+) as cofactor. Zn(2+) serves as cofactor.

It catalyses the reaction RNA(n) + a ribonucleoside 5'-triphosphate = RNA(n+1) + diphosphate. Functionally, DNA-dependent RNA polymerase catalyzes the transcription of DNA into RNA using the four ribonucleoside triphosphates as substrates. This chain is DNA-directed RNA polymerase subunit beta', found in Bordetella avium (strain 197N).